A 354-amino-acid polypeptide reads, in one-letter code: Galectin-9 (354 aa).

Galectin domains follow at residues 17-147 and 226-354; these read FTGI…INFQ and FFTS…HVQT. A beta-D-galactoside contacts are provided by residues Asn-47, His-60, Arg-64, Asn-74, 81–87, His-266, Arg-270, Thr-280, and 286–292; these read WGPEERK and WGPEERS.

In terms of tissue distribution, the isoform Long is expressed exclusively in the small intestine.

The protein resides in the cytoplasm. The protein localises to the nucleus. It localises to the secreted. In terms of biological role, binds galactosides. Has high affinity for the Forssman pentasaccharide. Ligand for HAVCR2/TIM3. Binding to HAVCR2 induces T-helper type 1 lymphocyte (Th1) death. Also stimulates bactericidal activity in infected macrophages by causing macrophage activation and IL1B secretion which restricts intracellular bacterial growth. Ligand for P4HB; the interaction retains P4HB at the cell surface of Th2 T helper cells, increasing disulfide reductase activity at the plasma membrane, altering the plasma membrane redox state and enhancing cell migration. Ligand for CD44; the interaction enhances binding of SMAD3 to the FOXP3 promoter, leading to up-regulation of FOXP3 expression and increased induced regulatory T (iTreg) cell stability and suppressive function. Promotes ability of mesenchymal stromal cells to suppress T-cell proliferation. Expands regulatory T-cells and induces cytotoxic T-cell apoptosis following virus infection. Activates ERK1/2 phosphorylation inducing cytokine (IL-6, IL-8, IL-12) and chemokine (CCL2) production in mast and dendritic cells. Inhibits degranulation and induces apoptosis of mast cells. Induces maturation and migration of dendritic cells. Inhibits natural killer (NK) cell function. Can transform NK cell phenotype from peripheral to decidual during pregnancy. Astrocyte derived galectin-9 enhances microglial TNF production. May play a role in thymocyte-epithelial interactions relevant to the biology of the thymus. May provide the molecular basis for urate flux across cell membranes, allowing urate that is formed during purine metabolism to efflux from cells and serving as an electrogenic transporter that plays an important role in renal and gastrointestinal urate excretion. Highly selective to the anion urate. The polypeptide is Galectin-9 (Lgals9) (Rattus norvegicus (Rat)).